Here is a 440-residue protein sequence, read N- to C-terminus: Beta-1,3-galactosyl-O-glycosyl-glycoprotein beta-1,6-N-acetylglucosaminyltransferase 3 (440 aa).

Residues 1–12 (MKMTGWKKKLCR) lie on the Cytoplasmic side of the membrane. Residues 13–30 (GHHLWALGCYMLLAVVAL) form a helical; Signal-anchor for type II membrane protein membrane-spanning segment. Over 31-440 (RLSLRLKCDV…RHKAIYGTEL (410 aa)) the chain is Lumenal. 4 cysteine pairs are disulfide-bonded: C73–C230, C164–C384, C185–C212, and C393–C425. Residue N108 is glycosylated (N-linked (GlcNAc...) asparagine).

The protein belongs to the glycosyltransferase 14 family. N-glycosylated.

The protein resides in the golgi apparatus membrane. It carries out the reaction a 3-O-[beta-D-galactosyl-(1-&gt;3)-N-acetyl-alpha-D-galactosaminyl]-L-seryl-[protein] + UDP-N-acetyl-alpha-D-glucosamine = 3-O-{beta-D-galactosyl-(1-&gt;3)-[N-acetyl-beta-D-glucosaminyl-(1-&gt;6)]-N-acetyl-alpha-D-galactosaminyl}-L-seryl-[protein] + UDP + H(+). The catalysed reaction is a 3-O-[beta-D-galactosyl-(1-&gt;3)-N-acetyl-alpha-D-galactosaminyl]-L-threonyl-[protein] + UDP-N-acetyl-alpha-D-glucosamine = a 3-O-{beta-D-galactosyl-(1-&gt;3)-[N-acetyl-beta-D-glucosaminyl-(1-&gt;6)]-N-acetyl-alpha-D-galactosaminyl}-L-threonyl-[protein] + UDP + H(+). It catalyses the reaction a beta-D-Gal-(1-&gt;4)-beta-D-GlcNAc-(1-&gt;3)-beta-D-Gal-(1-&gt;4)-beta-D-GlcNAc derivative + UDP-N-acetyl-alpha-D-glucosamine = a beta-D-Gal-(1-&gt;4)-beta-D-GlcNAc-(1-&gt;3)-[beta-D-GlcNAc-(1-&gt;6)]-beta-D-Gal-(1-&gt;4)-N-acetyl-beta-D-glucosaminyl derivative + UDP + H(+). The enzyme catalyses 3-O-[N-acetyl-beta-D-glucosaminyl-(1-&gt;3)-N-acetyl-alpha-D-galactosaminyl]-L-seryl-[protein] + UDP-N-acetyl-alpha-D-glucosamine = 3-O-[N-acetyl-beta-D-glucosaminyl-(1-&gt;3)-[N-acetyl-beta-D-glucosaminyl-(1-&gt;6)]-N-acetyl-alpha-D-galactosaminyl]-L-seryl-[protein] + UDP + H(+). It carries out the reaction a 3-O-[N-acetyl-beta-D-glucosaminyl-(1-&gt;3)-N-acetyl-alpha-D-galactosaminyl]-L-threonyl-[protein] + UDP-N-acetyl-alpha-D-glucosamine = 3-O-[N-acetyl-beta-D-glucosaminyl-(1-&gt;3)-[N-acetyl-beta-D-glucosaminyl-(1-&gt;6)]-N-acetyl-alpha-D-galactosaminyl]-L-threonyl-[protein] + UDP + H(+). The protein operates within protein modification; protein glycosylation. Glycosyltransferase that can synthesize all known mucin beta 6 N-acetylglucosaminides. Mediates core 2 and core 4 O-glycan branching, 2 important steps in mucin-type biosynthesis. Also has I-branching enzyme activity by converting linear into branched poly-N-acetyllactosaminoglycans, leading to introduce the blood group I antigen during embryonic development. In Ovis aries (Sheep), this protein is Beta-1,3-galactosyl-O-glycosyl-glycoprotein beta-1,6-N-acetylglucosaminyltransferase 3 (GCNT3).